The primary structure comprises 224 residues: Uracil-DNA glycosylase (224 aa).

D62 (proton acceptor) is an active-site residue.

The protein belongs to the uracil-DNA glycosylase (UDG) superfamily. UNG family.

Its subcellular location is the cytoplasm. It carries out the reaction Hydrolyzes single-stranded DNA or mismatched double-stranded DNA and polynucleotides, releasing free uracil.. In terms of biological role, excises uracil residues from the DNA which can arise as a result of misincorporation of dUMP residues by DNA polymerase or due to deamination of cytosine. The protein is Uracil-DNA glycosylase of Aliivibrio salmonicida (strain LFI1238) (Vibrio salmonicida (strain LFI1238)).